A 394-amino-acid polypeptide reads, in one-letter code: Cytochrome b (394 aa).

Transmembrane regions (helical) follow at residues 39 to 59, 83 to 105, 120 to 140, and 186 to 206; these read FGSL…FLAM, WLLR…LHTF, VWCL…IGYV, and FFSL…LHLA. Residues His89 and His103 each coordinate heme b. The heme b site is built by His191 and His204. His209 provides a ligand contact to a ubiquinone. The next 4 helical transmembrane spans lie at 232 to 252, 296 to 316, 328 to 348, and 355 to 374; these read FYVK…IWIF, AGGV…PFFK, IYQG…WIGC, and FVTI…AITP.

The protein belongs to the cytochrome b family. As to quaternary structure, the main subunits of complex b-c1 are: cytochrome b, cytochrome c1 and the Rieske protein. Requires heme b as cofactor.

It localises to the mitochondrion inner membrane. In terms of biological role, component of the ubiquinol-cytochrome c reductase complex (complex III or cytochrome b-c1 complex) that is part of the mitochondrial respiratory chain. The b-c1 complex mediates electron transfer from ubiquinol to cytochrome c. Contributes to the generation of a proton gradient across the mitochondrial membrane that is then used for ATP synthesis. In Oenothera berteroana (Bertero's evening primrose), this protein is Cytochrome b (MT-CYB).